A 783-amino-acid chain; its full sequence is Lon protease (783 aa).

The 193-residue stretch at 11-203 (IPVLPLRDVV…FLMGQMESEI (193 aa)) folds into the Lon N-terminal domain. An ATP-binding site is contributed by 355–362 (GPPGVGKT). Residues 591–772 (SNRIGQVTGL…DEVLKVALER (182 aa)) enclose the Lon proteolytic domain. Residues serine 678 and lysine 721 contribute to the active site.

It belongs to the peptidase S16 family. In terms of assembly, homohexamer. Organized in a ring with a central cavity.

The protein resides in the cytoplasm. It carries out the reaction Hydrolysis of proteins in presence of ATP.. Its function is as follows. ATP-dependent serine protease that mediates the selective degradation of mutant and abnormal proteins as well as certain short-lived regulatory proteins. Required for cellular homeostasis and for survival from DNA damage and developmental changes induced by stress. Degrades polypeptides processively to yield small peptide fragments that are 5 to 10 amino acids long. Binds to DNA in a double-stranded, site-specific manner. Regulates swarmer cell differentiation of V.parahaemolyticus. This Vibrio parahaemolyticus serotype O3:K6 (strain RIMD 2210633) protein is Lon protease.